We begin with the raw amino-acid sequence, 330 residues long: Inositol 2-dehydrogenase (330 aa).

The protein belongs to the Gfo/Idh/MocA family.

The catalysed reaction is myo-inositol + NAD(+) = scyllo-inosose + NADH + H(+). It participates in polyol metabolism; myo-inositol degradation into acetyl-CoA; acetyl-CoA from myo-inositol: step 1/7. Involved in the oxidation of myo-inositol (MI) to 2-keto-myo-inositol (2KMI or 2-inosose). The sequence is that of Inositol 2-dehydrogenase (idhA) from Rhizobium meliloti (strain 1021) (Ensifer meliloti).